The chain runs to 525 residues: Matrix extracellular phosphoglycoprotein (525 aa).

An N-terminal signal peptide occupies residues 1-17; the sequence is MRVFCVGLLLFSVTWAA. 3 disordered regions span residues 24–95, 187–216, and 237–525; these read TEKT…NRQR, AKAH…THRI, and EGSG…SDGD. Composition is skewed to basic and acidic residues over residues 25 to 46 and 64 to 73; these read EKTK…DNIG and IVQERKKDLS. Polar residues-rich tracts occupy residues 75–95 and 200–210; these read SEAS…NRQR and DSQAQKSPVKS. The tract at residues 242–264 is dentonin; sequence TDLQERGDNDISPFSGDGQPFKD. Residues 247–249 carry the Cell attachment site motif; it reads RGD. The O-linked (Xyl...) (chondroitin sulfate) serine glycan is linked to S256. 2 stretches are compositionally biased toward basic and acidic residues: residues 292 to 312 and 319 to 328; these read ESTH…REEN and TRDETAKEAD. Residues N477 and N478 are each glycosylated (N-linked (GlcNAc...) asparagine). Residues 507–525 are ASARM motif; interaction with PHEX; the sequence is RDDSSESSDSGSSSESDGD. Residues 513-525 are compositionally biased toward low complexity; it reads SSDSGSSSESDGD.

Belongs to the PF07175/osteoregulin family. As to quaternary structure, interacts (via the ASARM motif) with PHEX; the interaction is zinc-dependent. Phosphorylated on serine residues in the ASARM motif (in vitro) by FAM20C; the phosphorylation is important for the inhibition of bone mineralization. In terms of processing, cleaved by CTSB/cathepsin B; the cleavage is blocked by metalloprotease PHEX. Detected in urine (at protein level). Expressed by osteoblasts. Expressed by stem cells in dental pulp. Expressed by mesenchymal cells in dental papilla and dental pulp. Expressed in teeth, specifically in decidious dentin. Expressed in ondotoblasts. Expressed in salivary glands. Secreted from oncogenic hypophosphatemic tumors.

Its subcellular location is the secreted. The protein resides in the extracellular space. It is found in the extracellular matrix. In terms of biological role, promotes renal phosphate excretion and inhibits intestinal phosphate absorption. Promotes bone mineralization by osteoblasts and cartilage mineralization by chondrocytes. Regulates the mineralization of the extracellular matrix of the craniofacial complex, such as teeth, bone and cartilage. Promotes dental pulp stem cell proliferation and differentiation. This chain is Matrix extracellular phosphoglycoprotein (MEPE), found in Homo sapiens (Human).